A 595-amino-acid polypeptide reads, in one-letter code: Apolipoprotein N-acyltransferase 2 (595 aa).

5 helical membrane passes run 30-50, 63-83, 95-115, 167-187, and 210-230; these read FLAF…FGFF, LFFH…HWII, VVAI…FPIF, AEIT…YTLF, and FITL…FLFK. The region spanning 241–555 is the CN hydrolase domain; it reads LNVLIVQPDA…AEALSETIDV (315 aa). Glu293 serves as the catalytic Proton acceptor. Lys372 is an active-site residue. Cys463 functions as the Nucleophile in the catalytic mechanism. Residues 569-589 traverse the membrane as a helical segment; that stretch reads LIPWLMLFLTGIYYLNLLIGI.

The protein belongs to the CN hydrolase family. Apolipoprotein N-acyltransferase subfamily.

The protein resides in the cell inner membrane. The catalysed reaction is N-terminal S-1,2-diacyl-sn-glyceryl-L-cysteinyl-[lipoprotein] + a glycerophospholipid = N-acyl-S-1,2-diacyl-sn-glyceryl-L-cysteinyl-[lipoprotein] + a 2-acyl-sn-glycero-3-phospholipid + H(+). Its pathway is protein modification; lipoprotein biosynthesis (N-acyl transfer). Its function is as follows. Catalyzes the phospholipid dependent N-acylation of the N-terminal cysteine of apolipoprotein, the last step in lipoprotein maturation. This chain is Apolipoprotein N-acyltransferase 2, found in Leptospira interrogans serogroup Icterohaemorrhagiae serovar copenhageni (strain Fiocruz L1-130).